Consider the following 279-residue polypeptide: 3-methyl-2-oxobutanoate hydroxymethyltransferase (279 aa).

Residues D43 and D82 each contribute to the Mg(2+) site. Residues 43–44 (DS), D82, and K112 contribute to the 3-methyl-2-oxobutanoate site. A Mg(2+)-binding site is contributed by E114. E181 (proton acceptor) is an active-site residue.

This sequence belongs to the PanB family. In terms of assembly, homodecamer; pentamer of dimers. The cofactor is Mg(2+).

The protein resides in the cytoplasm. The catalysed reaction is 3-methyl-2-oxobutanoate + (6R)-5,10-methylene-5,6,7,8-tetrahydrofolate + H2O = 2-dehydropantoate + (6S)-5,6,7,8-tetrahydrofolate. The protein operates within cofactor biosynthesis; (R)-pantothenate biosynthesis; (R)-pantoate from 3-methyl-2-oxobutanoate: step 1/2. In terms of biological role, catalyzes the reversible reaction in which hydroxymethyl group from 5,10-methylenetetrahydrofolate is transferred onto alpha-ketoisovalerate to form ketopantoate. The polypeptide is 3-methyl-2-oxobutanoate hydroxymethyltransferase (Lysinibacillus sphaericus (strain C3-41)).